The following is a 494-amino-acid chain: Glutamyl-tRNA reductase (494 aa).

Substrate contacts are provided by residues 58–61, S118, 123–125, and Q129; these read TCNR and EQQ. Residue C59 is the Nucleophile of the active site. Position 205-210 (205-210) interacts with NADP(+); sequence GAGAMA. A disordered region spans residues 448–494; that stretch reads KGANAGSGQRKKQKPQENRVSTARAVYRSTYQDLTQASTPGGKDDDQ. Residues 476–486 show a composition bias toward polar residues; it reads STYQDLTQAST.

The protein belongs to the glutamyl-tRNA reductase family. As to quaternary structure, homodimer.

It carries out the reaction (S)-4-amino-5-oxopentanoate + tRNA(Glu) + NADP(+) = L-glutamyl-tRNA(Glu) + NADPH + H(+). It functions in the pathway porphyrin-containing compound metabolism; protoporphyrin-IX biosynthesis; 5-aminolevulinate from L-glutamyl-tRNA(Glu): step 1/2. Catalyzes the NADPH-dependent reduction of glutamyl-tRNA(Glu) to glutamate 1-semialdehyde (GSA). This chain is Glutamyl-tRNA reductase, found in Corynebacterium urealyticum (strain ATCC 43042 / DSM 7109).